The sequence spans 392 residues: Nicotinate phosphoribosyltransferase (392 aa).

Histidine 214 is modified (phosphohistidine; by autocatalysis).

It belongs to the NAPRTase family. In terms of processing, transiently phosphorylated on a His residue during the reaction cycle. Phosphorylation strongly increases the affinity for substrates and increases the rate of nicotinate D-ribonucleotide production. Dephosphorylation regenerates the low-affinity form of the enzyme, leading to product release.

It catalyses the reaction nicotinate + 5-phospho-alpha-D-ribose 1-diphosphate + ATP + H2O = nicotinate beta-D-ribonucleotide + ADP + phosphate + diphosphate. Its pathway is cofactor biosynthesis; NAD(+) biosynthesis; nicotinate D-ribonucleotide from nicotinate: step 1/1. Its function is as follows. Catalyzes the synthesis of beta-nicotinate D-ribonucleotide from nicotinate and 5-phospho-D-ribose 1-phosphate at the expense of ATP. The chain is Nicotinate phosphoribosyltransferase from Xanthomonas euvesicatoria pv. vesicatoria (strain 85-10) (Xanthomonas campestris pv. vesicatoria).